The sequence spans 243 residues: Zinc import ATP-binding protein ZnuC (243 aa).

The 216-residue stretch at 4 to 219 (ITVENLSVRY…PEYRALFGTG (216 aa)) folds into the ABC transporter domain. Position 36–43 (36–43 (GPNGSGKT)) interacts with ATP.

Belongs to the ABC transporter superfamily. Zinc importer (TC 3.A.1.15.5) family. In terms of assembly, the complex is composed of two ATP-binding proteins (ZnuC), two transmembrane proteins (ZnuB) and a solute-binding protein (ZnuA).

The protein resides in the cell inner membrane. The enzyme catalyses Zn(2+)(out) + ATP(in) + H2O(in) = Zn(2+)(in) + ADP(in) + phosphate(in) + H(+)(in). Functionally, part of the ABC transporter complex ZnuABC involved in zinc import. Responsible for energy coupling to the transport system. This Jannaschia sp. (strain CCS1) protein is Zinc import ATP-binding protein ZnuC.